Consider the following 294-residue polypeptide: 4-hydroxy-tetrahydrodipicolinate synthase (294 aa).

Position 44 (T44) interacts with pyruvate. Y132 serves as the catalytic Proton donor/acceptor. K160 serves as the catalytic Schiff-base intermediate with substrate. I205 lines the pyruvate pocket.

This sequence belongs to the DapA family. As to quaternary structure, homotetramer; dimer of dimers.

The protein resides in the cytoplasm. It carries out the reaction L-aspartate 4-semialdehyde + pyruvate = (2S,4S)-4-hydroxy-2,3,4,5-tetrahydrodipicolinate + H2O + H(+). Its pathway is amino-acid biosynthesis; L-lysine biosynthesis via DAP pathway; (S)-tetrahydrodipicolinate from L-aspartate: step 3/4. In terms of biological role, catalyzes the condensation of (S)-aspartate-beta-semialdehyde [(S)-ASA] and pyruvate to 4-hydroxy-tetrahydrodipicolinate (HTPA). This chain is 4-hydroxy-tetrahydrodipicolinate synthase, found in Kosmotoga olearia (strain ATCC BAA-1733 / DSM 21960 / TBF 19.5.1).